The primary structure comprises 316 residues: Ribonuclease Z (316 aa).

Zn(2+) contacts are provided by His63, His65, Asp67, His68, His143, Asp213, and His271. Residue Asp67 is the Proton acceptor of the active site.

Belongs to the RNase Z family. Homodimer. It depends on Zn(2+) as a cofactor.

The enzyme catalyses Endonucleolytic cleavage of RNA, removing extra 3' nucleotides from tRNA precursor, generating 3' termini of tRNAs. A 3'-hydroxy group is left at the tRNA terminus and a 5'-phosphoryl group is left at the trailer molecule.. In terms of biological role, zinc phosphodiesterase, which displays some tRNA 3'-processing endonuclease activity. Probably involved in tRNA maturation, by removing a 3'-trailer from precursor tRNA. The protein is Ribonuclease Z of Bacteroides thetaiotaomicron (strain ATCC 29148 / DSM 2079 / JCM 5827 / CCUG 10774 / NCTC 10582 / VPI-5482 / E50).